Consider the following 260-residue polypeptide: MAKDDSTVRCFQGLLIFGNVIIGMCSIALMAECIFFVSDQNSLYPLLEATNNDDIYAAAWIGMFVGICLFCLSVLGIVGIMKSNRKILLVYFILMFIVYAFEVASCITAATQRDFFTPNLFLKQMLERYQNNSPPNNDDQWKNNGVTKTWDRLMLQDNCCGVNGPSDWQKYTSAFRTENSDADYPWPRQCCVMNSLKEPLNLDACKLGVPGYYHSQGCYELISGPMNRHAWGVAWFGFAILCWTFWVLLGTMFYWSRIDY.

The Cytoplasmic segment spans residues 2-15 (AKDDSTVRCFQGLL). A helical membrane pass occupies residues 16 to 36 (IFGNVIIGMCSIALMAECIFF). Topologically, residues 37-60 (VSDQNSLYPLLEATNNDDIYAAAW) are extracellular. The chain crosses the membrane as a helical span at residues 61 to 81 (IGMFVGICLFCLSVLGIVGIM). Residues 82-86 (KSNRK) are Cytoplasmic-facing. The chain crosses the membrane as a helical span at residues 87–107 (ILLVYFILMFIVYAFEVASCI). The Extracellular portion of the chain corresponds to 108-229 (TAATQRDFFT…ELISGPMNRH (122 aa)). Residues 230–250 (AWGVAWFGFAILCWTFWVLLG) traverse the membrane as a helical segment. Over 251-260 (TMFYWSRIDY) the chain is Cytoplasmic.

Belongs to the tetraspanin (TM4SF) family. In terms of assembly, heterodimer with uroplakin-3A (UPK3A) or uroplakin-3B (UPK3B). Post-translationally, N-glycosylated with high-mannose oligosaccharides. In terms of tissue distribution, bladder epithelium.

It localises to the membrane. In terms of biological role, component of the asymmetric unit membrane (AUM); a highly specialized biomembrane elaborated by terminally differentiated urothelial cells. May play an important role in normal bladder epithelial physiology, possibly in regulating membrane permeability of superficial umbrella cells or in stabilizing the apical membrane through AUM/cytoskeletal interactions. This is Uroplakin-1b (UPK1B) from Bos taurus (Bovine).